We begin with the raw amino-acid sequence, 379 residues long: Epoxyqueuosine reductase (379 aa).

The active-site Proton donor is aspartate 139. The region spanning 181–213 (IPLPVDQPVEEGCGKCVACMTICPTGAIVEPYT) is the 4Fe-4S ferredoxin-type domain. The [4Fe-4S] cluster site is built by cysteine 193, cysteine 196, cysteine 199, cysteine 203, cysteine 219, cysteine 246, cysteine 249, and cysteine 253.

Belongs to the QueG family. In terms of assembly, monomer. Requires cob(II)alamin as cofactor. It depends on [4Fe-4S] cluster as a cofactor.

The protein localises to the cytoplasm. It catalyses the reaction epoxyqueuosine(34) in tRNA + AH2 = queuosine(34) in tRNA + A + H2O. The protein operates within tRNA modification; tRNA-queuosine biosynthesis. Its function is as follows. Catalyzes the conversion of epoxyqueuosine (oQ) to queuosine (Q), which is a hypermodified base found in the wobble positions of tRNA(Asp), tRNA(Asn), tRNA(His) and tRNA(Tyr). This is Epoxyqueuosine reductase from Escherichia coli (strain K12).